A 561-amino-acid chain; its full sequence is Septation ring formation regulator EzrA (561 aa).

Over methionine 1–isoleucine 3 the chain is Extracellular. Residues valine 4–arginine 22 form a helical membrane-spanning segment. Residues arginine 23 to glycine 561 lie on the Cytoplasmic side of the membrane. 3 coiled-coil regions span residues arginine 98 to leucine 130, alanine 166 to lysine 214, and phenylalanine 251 to aspartate 465.

Belongs to the EzrA family.

The protein localises to the cell membrane. Functionally, negative regulator of FtsZ ring formation; modulates the frequency and position of FtsZ ring formation. Inhibits FtsZ ring formation at polar sites. Interacts either with FtsZ or with one of its binding partners to promote depolymerization. The protein is Septation ring formation regulator EzrA of Halalkalibacterium halodurans (strain ATCC BAA-125 / DSM 18197 / FERM 7344 / JCM 9153 / C-125) (Bacillus halodurans).